The following is a 45-amino-acid chain: Photosystem II reaction center protein K (45 aa).

Positions 1 to 8 (MEAVFLLA) are excised as a propeptide. Residues 24–44 (LPVIPVFFLALAFVWQAAVGF) traverse the membrane as a helical segment.

The protein belongs to the PsbK family. In terms of assembly, PSII is composed of 1 copy each of membrane proteins PsbA, PsbB, PsbC, PsbD, PsbE, PsbF, PsbH, PsbI, PsbJ, PsbK, PsbL, PsbM, PsbT, PsbX, PsbY, PsbZ, Psb30/Ycf12, peripheral proteins PsbO, CyanoQ (PsbQ), PsbU, PsbV and a large number of cofactors. It forms dimeric complexes.

It is found in the cellular thylakoid membrane. Functionally, one of the components of the core complex of photosystem II (PSII). PSII is a light-driven water:plastoquinone oxidoreductase that uses light energy to abstract electrons from H(2)O, generating O(2) and a proton gradient subsequently used for ATP formation. It consists of a core antenna complex that captures photons, and an electron transfer chain that converts photonic excitation into a charge separation. The protein is Photosystem II reaction center protein K of Crocosphaera subtropica (strain ATCC 51142 / BH68) (Cyanothece sp. (strain ATCC 51142)).